The chain runs to 67 residues: Cold shock-like protein CspE (67 aa).

A CSD domain is found at 5–64; it reads GKVKWFNSEKGFGFIEVEGGNDVFVHFSAITGDGFKSLDEGQEVSFEVEDGNRGPQAKNV.

As to quaternary structure, homodimer.

Its subcellular location is the cytoplasm. Functionally, can bind to ATTGG and CCAAT motifs (Y-box motifs) of single-stranded oligonucleotides. This chain is Cold shock-like protein CspE (cspE), found in Bacillus anthracis.